The following is a 165-amino-acid chain: Small ribosomal subunit protein uS5 (165 aa).

In terms of domain architecture, S5 DRBM spans 13–76 (LEEKVLVVNR…EAARKNLITI (64 aa)).

This sequence belongs to the universal ribosomal protein uS5 family. In terms of assembly, part of the 30S ribosomal subunit. Contacts proteins S4 and S8.

In terms of biological role, with S4 and S12 plays an important role in translational accuracy. Its function is as follows. Located at the back of the 30S subunit body where it stabilizes the conformation of the head with respect to the body. The chain is Small ribosomal subunit protein uS5 from Chlamydia caviae (strain ATCC VR-813 / DSM 19441 / 03DC25 / GPIC) (Chlamydophila caviae).